A 63-amino-acid chain; its full sequence is Protein BP4A (63 aa).

As to expression, pollen specific.

In Brassica napus (Rape), this protein is Protein BP4A (BP4A).